Here is a 183-residue protein sequence, read N- to C-terminus: Putative NAD(P)H nitroreductase YdjA (183 aa).

Residues 10–12 (RRS), Arg-35, and His-39 each bind FMN. An NAD(+)-binding site is contributed by 121 to 126 (AAVAQG). Position 131-133 (131-133 (WRS)) interacts with FMN.

Belongs to the nitroreductase family. Homodimer. Requires FMN as cofactor.

This is Putative NAD(P)H nitroreductase YdjA (ydjA) from Escherichia coli O157:H7.